We begin with the raw amino-acid sequence, 383 residues long: Succinyl-diaminopimelate desuccinylase (383 aa).

His73 serves as a coordination point for Zn(2+). Residue Asp75 is part of the active site. Residue Asp107 coordinates Zn(2+). The active-site Proton acceptor is the Glu141. Glu142, Glu170, and His356 together coordinate Zn(2+).

This sequence belongs to the peptidase M20A family. DapE subfamily. As to quaternary structure, homodimer. Requires Zn(2+) as cofactor. Co(2+) serves as cofactor.

The catalysed reaction is N-succinyl-(2S,6S)-2,6-diaminopimelate + H2O = (2S,6S)-2,6-diaminopimelate + succinate. The protein operates within amino-acid biosynthesis; L-lysine biosynthesis via DAP pathway; LL-2,6-diaminopimelate from (S)-tetrahydrodipicolinate (succinylase route): step 3/3. In terms of biological role, catalyzes the hydrolysis of N-succinyl-L,L-diaminopimelic acid (SDAP), forming succinate and LL-2,6-diaminopimelate (DAP), an intermediate involved in the bacterial biosynthesis of lysine and meso-diaminopimelic acid, an essential component of bacterial cell walls. The polypeptide is Succinyl-diaminopimelate desuccinylase (Pseudomonas syringae pv. syringae (strain B728a)).